The chain runs to 248 residues: MQHPLEIGAHYYPPDAHLDQRSHRYRSFMIEEILTDHPDQKISSPTGDLLKFGVHALLSARPYHNHLVLKADQTGILKFPVSPLSCSLGAPLSSALLSGAAGLQVGSSSHHLPLDLHLRGKLDPGADAVSKTKKGRRSRTVFTELQLMGLEKRFEKQKYLSTPDRIDLAESLGLSQLQVKTWYQNRRMKWKKIVLQGGGLESPTKPKGRPKKNSIPTSEQLSEQERTREADRLSDGGASSLSDANQEE.

The homeobox DNA-binding region spans 135–194 (GRRSRTVFTELQLMGLEKRFEKQKYLSTPDRIDLAESLGLSQLQVKTWYQNRRMKWKKIV). The tract at residues 197–248 (GGGLESPTKPKGRPKKNSIPTSEQLSEQERTREADRLSDGGASSLSDANQEE) is disordered. Residues 223–234 (EQERTREADRLS) show a composition bias toward basic and acidic residues. Over residues 237–248 (GASSLSDANQEE) the composition is skewed to polar residues.

It belongs to the BAR homeobox family.

It localises to the nucleus. Functionally, transcription factor, is involved in craniofacial development, and in stomach organogenesis. The protein is Homeobox protein BarH-like 1 (barx1) of Danio rerio (Zebrafish).